A 339-amino-acid chain; its full sequence is MKMNEKVILHDMSLRDGMHAKQHQISINQMISAATAMDEAGIPLIEVTHGDGLGGASLNYGFPAHSDEEYLSAVIPKMKQAKVSALLLPGIGTVDHLNMAKDLGVSTIRVATHCTEADISQQHIDHASKLGLDTVGFLMMAHMASVDKIVEQAKLMVSYGANCVYCTDSAGYMLPDEVSLKISALRDTLPSSIDIGFHGHHNLALGVANSVAAIQSGARRIDGSVAGLGAGAGNTPLEVLVAVMNRMEIQSGIDLYKIMDIAEDIIVPMMDQPIRVDRDSLTLGYAGVYSSFLLFAKRAEAKYGISARDVLVELGKRGTVGGQEDMIEDLALSMSKLCK.

In terms of domain architecture, Pyruvate carboxyltransferase spans Val-7–Met-259. Arg-15–Asp-16 is a binding site for substrate. Asp-16 provides a ligand contact to Mn(2+). Catalysis depends on His-19, which acts as the Proton acceptor. 2 residues coordinate substrate: Ser-169 and His-198. Mn(2+) contacts are provided by His-198 and His-200. Position 289 (Tyr-289) interacts with substrate.

Belongs to the 4-hydroxy-2-oxovalerate aldolase family.

It carries out the reaction (S)-4-hydroxy-2-oxopentanoate = acetaldehyde + pyruvate. This is 4-hydroxy-2-oxovalerate aldolase from Marinomonas sp. (strain MWYL1).